The chain runs to 378 residues: Queuine tRNA-ribosyltransferase (378 aa).

Asp89 acts as the Proton acceptor in catalysis. Residues 89 to 93, Asp143, Gln187, and Gly214 contribute to the substrate site; that span reads DSGGF. The segment at 245-251 is RNA binding; it reads GVGKPQD. The Nucleophile role is filled by Asp264. The tract at residues 269 to 273 is RNA binding; important for wobble base 34 recognition; it reads TRNAR. Residues Cys302, Cys304, Cys307, and His334 each coordinate Zn(2+).

This sequence belongs to the queuine tRNA-ribosyltransferase family. As to quaternary structure, homodimer. Within each dimer, one monomer is responsible for RNA recognition and catalysis, while the other monomer binds to the replacement base PreQ1. Zn(2+) serves as cofactor.

It catalyses the reaction 7-aminomethyl-7-carbaguanine + guanosine(34) in tRNA = 7-aminomethyl-7-carbaguanosine(34) in tRNA + guanine. Its pathway is tRNA modification; tRNA-queuosine biosynthesis. In terms of biological role, catalyzes the base-exchange of a guanine (G) residue with the queuine precursor 7-aminomethyl-7-deazaguanine (PreQ1) at position 34 (anticodon wobble position) in tRNAs with GU(N) anticodons (tRNA-Asp, -Asn, -His and -Tyr). Catalysis occurs through a double-displacement mechanism. The nucleophile active site attacks the C1' of nucleotide 34 to detach the guanine base from the RNA, forming a covalent enzyme-RNA intermediate. The proton acceptor active site deprotonates the incoming PreQ1, allowing a nucleophilic attack on the C1' of the ribose to form the product. After dissociation, two additional enzymatic reactions on the tRNA convert PreQ1 to queuine (Q), resulting in the hypermodified nucleoside queuosine (7-(((4,5-cis-dihydroxy-2-cyclopenten-1-yl)amino)methyl)-7-deazaguanosine). The protein is Queuine tRNA-ribosyltransferase of Blochmanniella floridana.